Reading from the N-terminus, the 186-residue chain is MDQTQNTIAGIGEINGSIKTEINAIATVDDSNEKLNQIINSNQKILELLHQLKLTVSSFTPASQLHLLQRLNSLVMELDNMAKLSDKCNIQVPIEVLNLIDDGKNPDEFTKDVLNKNCIAKNQVTKGKSDAFKGLRKHLLEELEQAFPDEVDRYRDIRASYAAEAKRLAQTQSVLPNGDAKVKSEL.

The protein belongs to the Mediator complex subunit 10 family. In terms of assembly, mono-, di- and oligomers. Component of the Mediator complex. Interacts with GEBPL.

Its subcellular location is the nucleus. Its function is as follows. Component of the Mediator complex, a coactivator involved in the regulated transcription of nearly all RNA polymerase II-dependent genes. Mediator functions as a bridge to convey information from gene-specific regulatory proteins to the basal RNA polymerase II transcription machinery. The Mediator complex, having a compact conformation in its free form, is recruited to promoters by direct interactions with regulatory proteins and serves for the assembly of a functional pre-initiation complex with RNA polymerase II and the general transcription factors. This chain is Mediator of RNA polymerase II transcription subunit 10a, found in Arabidopsis thaliana (Mouse-ear cress).